The primary structure comprises 292 residues: Ornithine decarboxylase antizyme (292 aa).

This sequence belongs to the ODC antizyme family. Interacts with ODC/SPE1 and thereby sterically blocks ODC homodimerization.

Its function is as follows. Ornithine decarboxylase (ODC) antizyme protein that negatively regulates ODC activity and intracellular polyamine biosynthesis in response to increased intracellular polyamine levels. Binds to ODC/SPE1 monomers, inhibiting the assembly of the functional ODC homodimer, and targets the monomers for ubiquitin-independent proteolytic destruction by the 26S proteasome. This is Ornithine decarboxylase antizyme (OAZ1) from Saccharomyces cerevisiae (strain ATCC 204508 / S288c) (Baker's yeast).